The sequence spans 155 residues: SsrA-binding protein (155 aa).

It belongs to the SmpB family.

The protein localises to the cytoplasm. In terms of biological role, required for rescue of stalled ribosomes mediated by trans-translation. Binds to transfer-messenger RNA (tmRNA), required for stable association of tmRNA with ribosomes. tmRNA and SmpB together mimic tRNA shape, replacing the anticodon stem-loop with SmpB. tmRNA is encoded by the ssrA gene; the 2 termini fold to resemble tRNA(Ala) and it encodes a 'tag peptide', a short internal open reading frame. During trans-translation Ala-aminoacylated tmRNA acts like a tRNA, entering the A-site of stalled ribosomes, displacing the stalled mRNA. The ribosome then switches to translate the ORF on the tmRNA; the nascent peptide is terminated with the 'tag peptide' encoded by the tmRNA and targeted for degradation. The ribosome is freed to recommence translation, which seems to be the essential function of trans-translation. This Streptococcus pyogenes serotype M18 (strain MGAS8232) protein is SsrA-binding protein.